A 150-amino-acid chain; its full sequence is SPbeta prophage-derived uncharacterized protein YoqH (150 aa).

Residues 1–23 (MKRFILVLSFLSIIVAYPIQTNA) form the signal peptide.

The polypeptide is SPbeta prophage-derived uncharacterized protein YoqH (yoqH) (Bacillus subtilis (strain 168)).